The sequence spans 114 residues: Probable 4-amino-4-deoxy-L-arabinose-phosphoundecaprenol flippase subunit ArnE (114 aa).

3 helical membrane passes run 38–58, 64–84, and 94–114; these read LTLR…LLWL, LPLS…TLAA, and LRHW…SWHL. In terms of domain architecture, EamA spans 43 to 112; sequence LAIAVVSLGL…IMFGILLMSW (70 aa).

This sequence belongs to the ArnE family. In terms of assembly, heterodimer of ArnE and ArnF.

It localises to the cell inner membrane. The protein operates within bacterial outer membrane biogenesis; lipopolysaccharide biosynthesis. Translocates 4-amino-4-deoxy-L-arabinose-phosphoundecaprenol (alpha-L-Ara4N-phosphoundecaprenol) from the cytoplasmic to the periplasmic side of the inner membrane. In Yersinia pestis bv. Antiqua (strain Antiqua), this protein is Probable 4-amino-4-deoxy-L-arabinose-phosphoundecaprenol flippase subunit ArnE.